The primary structure comprises 448 residues: Antilisterial bacteriocin subtilosin biosynthesis protein AlbA (448 aa).

The Radical SAM core domain maps to 115 to 329 (FPMPLHATFE…EQHVIDEFKD (215 aa)). The [4Fe-4S] cluster site is built by C129, C133, C136, C408, C414, and C417.

Requires [4Fe-4S] cluster as cofactor.

It localises to the cytoplasm. In terms of biological role, catalyzes the formation of 3 thioether bonds during production of the sactipeptide subtilosin from SboA. In vitro the thioether bonds cannot be made in the absence of the SboA propeptide, suggesting this is the first reaction in subtilosin maturation. In vitro, in the absence of a second substrate, cleaves S-adenosyl-L-methionine into Met and 5'-dA. The protein is Antilisterial bacteriocin subtilosin biosynthesis protein AlbA (albA) of Bacillus subtilis (strain 168).